The sequence spans 196 residues: Putative HTH-type transcriptional regulator protein PtxE (196 aa).

Residues 1-59 (MLNPVWLKSLVAIVQTGSFQSAARALGLAQPTVSQHLQKLEEQVGVTLVQRSRSGCQPT) form the HTH lysR-type domain. Residues 19–38 (FQSAARALGLAQPTVSQHLQ) constitute a DNA-binding region (H-T-H motif).

The protein belongs to the LysR transcriptional regulatory family.

The polypeptide is Putative HTH-type transcriptional regulator protein PtxE (ptxE) (Stutzerimonas stutzeri (Pseudomonas stutzeri)).